Reading from the N-terminus, the 475-residue chain is 3-isopropylmalate dehydratase large subunit (475 aa).

The [4Fe-4S] cluster site is built by Cys352, Cys413, and Cys416.

Belongs to the aconitase/IPM isomerase family. LeuC type 1 subfamily. As to quaternary structure, heterodimer of LeuC and LeuD. [4Fe-4S] cluster serves as cofactor.

It carries out the reaction (2R,3S)-3-isopropylmalate = (2S)-2-isopropylmalate. The protein operates within amino-acid biosynthesis; L-leucine biosynthesis; L-leucine from 3-methyl-2-oxobutanoate: step 2/4. Its function is as follows. Catalyzes the isomerization between 2-isopropylmalate and 3-isopropylmalate, via the formation of 2-isopropylmaleate. This chain is 3-isopropylmalate dehydratase large subunit, found in Pseudomonas syringae pv. tomato (strain ATCC BAA-871 / DC3000).